A 72-amino-acid polypeptide reads, in one-letter code: Gas vesicle protein A (72 aa).

Belongs to the gas vesicle GvpA family. In terms of assembly, the gas vesicle shell is 2 nm thick and consists of a single layer of this protein. It forms helical ribs nearly perpendicular to the long axis of the vesicle.

The protein resides in the gas vesicle shell. Gas vesicles are hollow, gas filled proteinaceous nanostructures found in some microorganisms. During planktonic growth they allow positioning of the organism at a favorable depth for light or nutrient acquisition. GvpA forms the protein shell. This is Gas vesicle protein A from Synechococcus sp. (strain JA-3-3Ab) (Cyanobacteria bacterium Yellowstone A-Prime).